A 339-amino-acid chain; its full sequence is tRNA N6-adenosine threonylcarbamoyltransferase (339 aa).

The Fe cation site is built by His-111 and His-115. Residues 134-138 (LVSGG), Asp-167, Gly-180, and Asn-272 each bind substrate. Asp-300 contributes to the Fe cation binding site.

Belongs to the KAE1 / TsaD family. Fe(2+) serves as cofactor.

The protein localises to the cytoplasm. The catalysed reaction is L-threonylcarbamoyladenylate + adenosine(37) in tRNA = N(6)-L-threonylcarbamoyladenosine(37) in tRNA + AMP + H(+). Its function is as follows. Required for the formation of a threonylcarbamoyl group on adenosine at position 37 (t(6)A37) in tRNAs that read codons beginning with adenine. Is involved in the transfer of the threonylcarbamoyl moiety of threonylcarbamoyl-AMP (TC-AMP) to the N6 group of A37, together with TsaE and TsaB. TsaD likely plays a direct catalytic role in this reaction. This chain is tRNA N6-adenosine threonylcarbamoyltransferase, found in Vibrio cholerae serotype O1 (strain ATCC 39541 / Classical Ogawa 395 / O395).